The following is a 214-amino-acid chain: MNFLLSWVHWTLALLLYLHHAKWSQAAPTTEGEQKAHEVVKFMDVYQRSYCRPIETLVDIFQEYPDEIEYIFKPSCVPLMRCAGCCNDEALECVPTSESNVTMQIMRIKPHQSQHIGEMSFLQHSRCECRPKKDRTKPEKKSVRGKGKGQKRKRKKSRFKSWSVHCEPCSERRKHLFVQDPQTCKCSCKNTDSRCKARQLELNERTCRCDKPRR.

An N-terminal signal peptide occupies residues 1-26 (MNFLLSWVHWTLALLLYLHHAKWSQA). Disulfide bonds link cysteine 51–cysteine 93, cysteine 82–cysteine 127, and cysteine 86–cysteine 129. An N-linked (GlcNAc...) asparagine glycan is attached at asparagine 100. The span at 131–142 (PKKDRTKPEKKS) shows a compositional bias: basic and acidic residues. The interval 131-159 (PKKDRTKPEKKSVRGKGKGQKRKRKKSRF) is disordered. The segment covering 143–159 (VRGKGKGQKRKRKKSRF) has biased composition (basic residues).

Belongs to the PDGF/VEGF growth factor family. Homodimer; disulfide-linked. Also found as heterodimer with PGF. Interacts with NRP1. Interacts with isoform 2 of BSG. Interacts with CD82; this interaction inhibits VEGFA-mediated signaling pathway. In terms of tissue distribution, expressed in the pituitary, in brain, in particularly in supraoptic and paraventricular nuclei and the choroid plexus. Also found abundantly in the corpus luteum of the ovary and in kidney glomeruli. Expressed in the ductal epithelial cells of post-pubertal mammary glands. Expressed in the ductal and alveolar epithelial cells throughout the whole period of gestational evolution, lactation and involution.

Its subcellular location is the secreted. Functionally, growth factor active in angiogenesis, vasculogenesis and endothelial cell growth. Induces endothelial cell proliferation, promotes cell migration, inhibits apoptosis and induces permeabilization of blood vessels. Binds to the FLT1/VEGFR1 and KDR/VEGFR2 receptors, heparan sulfate and heparin. May play a role in increasing vascular permeability during lactation, when increased transport of molecules from the blood is required for efficient milk protein synthesis. Binding to NRP1 receptor initiates a signaling pathway needed for motor neuron axon guidance and cell body migration, including for the caudal migration of facial motor neurons from rhombomere 4 to rhombomere 6 during embryonic development. Also binds the DEAR/FBXW7-AS1 receptor. This is Vascular endothelial growth factor A (Vegfa) from Rattus norvegicus (Rat).